Reading from the N-terminus, the 266-residue chain is HLA class II histocompatibility antigen, DRB1 beta chain (266 aa).

An N-terminal signal peptide occupies residues 1–29; sequence MVCLKLPGGSCMTALTVTLMVLSSPLALS. A beta-1 region spans residues 30 to 124; sequence GDTRPRFLWQ…VESFTVQRRV (95 aa). Residues 30–227 are Extracellular-facing; that stretch reads GDTRPRFLWQ…RARSESAQSK (198 aa). The cysteines at positions 44 and 108 are disulfide-linked. The N-linked (GlcNAc...) asparagine glycan is linked to asparagine 48. The a peptide antigen site is built by aspartate 86, tryptophan 90, histidine 110, asparagine 111, and arginine 122. Residues 125-227 form a beta-2 region; that stretch reads QPKVTVYPSK…RARSESAQSK (103 aa). The region spanning 126–214 is the Ig-like C1-type domain; that stretch reads PKVTVYPSKT…EHPSVTSPLT (89 aa). The cysteines at positions 146 and 202 are disulfide-linked. Residues 228–248 form a helical membrane-spanning segment; the sequence is MLSGVGGFVLGLLFLGAGLFI. Topologically, residues 249–266 are cytoplasmic; it reads YFRNQKGHSGLQPTGFLS. Residue lysine 254 forms a Glycyl lysine isopeptide (Lys-Gly) (interchain with G-Cter in ubiquitin) linkage.

As to quaternary structure, heterotrimer that consists of an alpha chain HLA-DRA, a beta chain HLA-DRB1 and a peptide (peptide-MHCII). Newly synthesized alpha and beta chains forms a heterodimer (MHCII) that associates with the CD74/invariant chain (Ii) in the endoplasmic reticulum (ER). Ii is a trimer composed of three subunits and each subunit interacts with one MHCII dimer, blocking the peptide-binding cleft. As a result, MHCII molecules cannot bind peptides present in the ER. The complex of MHCII and CD74/Ii is transported in vesicles from ER to Golgi to lysosomes, where it encounters antigenic peptides generated via proteolysis of endocytosed antigens. MHCII dimers are dissociated from CD74/Ii by the combined action of proteolysis and HLA-DM. Lysosomal enzymes such as cathepsin, degrade CD74/Ii leaving a 24 amino acid remnant called class II-associated Ii or CLIP. Interacts (via the peptide binding cleft) with CLIP; this interaction inhibits antigen peptide binding before entry in the endosomal compartment. The displacement of CLIP and replacement by a high affinity peptide in lysosomes is performed by HLA-DM heterodimer. HLA-DM catalyzes CLIP dissociation from MHCII, stabilizes empty MHCII and mediates the selection of high affinity peptides. Interacts with HLA-DM heterodimer; this interaction is direct. Interacts with TCR (via CDR3). Interacts (via beta-2 domain) with CD4 coreceptor (via Ig-like V-type domain); this interaction is of exceptionally low affinity yet necessary for optimal recognition of antigenic peptides. In terms of assembly, (Microbial infection) Interacts with Staphylococcus aureus enterotoxin A/entA, enterotoxin B/entB, enterotoxin C1/entC1, enterotoxin D/entD and enterotoxin H/entH. Enterotoxins bind outside the peptide-binding cleft of MHCII: enterotoxin H/entH interacts via the beta-1 domain of MHCII and in a zinc-dependent way, whereas enterotoxin B/entB interacts primarily via the alpha-1 domain. (Microbial infection) Interacts with Epstein-Barr virus gp42 protein. Ubiquitinated by MARCHF1 and MARCHF8 at Lys-254 leading to sorting into the endosome system and down-regulation of MHCII. In terms of tissue distribution, expressed in professional APCs: monocyte/macrophages, dendritic cells and B cells (at protein level). Expressed in thymic epithelial cells (at protein level).

It localises to the cell membrane. Its subcellular location is the endoplasmic reticulum membrane. The protein resides in the lysosome membrane. The protein localises to the late endosome membrane. It is found in the autolysosome membrane. Functionally, a beta chain of antigen-presenting major histocompatibility complex class II (MHCII) molecule. In complex with the alpha chain HLA-DRA, displays antigenic peptides on professional antigen presenting cells (APCs) for recognition by alpha-beta T cell receptor (TCR) on HLA-DRB1-restricted CD4-positive T cells. This guides antigen-specific T-helper effector functions, both antibody-mediated immune response and macrophage activation, to ultimately eliminate the infectious agents and transformed cells. Typically presents extracellular peptide antigens of 10 to 30 amino acids that arise from proteolysis of endocytosed antigens in lysosomes. In the tumor microenvironment, presents antigenic peptides that are primarily generated in tumor-resident APCs likely via phagocytosis of apoptotic tumor cells or macropinocytosis of secreted tumor proteins. Presents peptides derived from intracellular proteins that are trapped in autolysosomes after macroautophagy, a mechanism especially relevant for T cell selection in the thymus and central immune tolerance. The selection of the immunodominant epitopes follows two processing modes: 'bind first, cut/trim later' for pathogen-derived antigenic peptides and 'cut first, bind later' for autoantigens/self-peptides. The anchor residue at position 1 of the peptide N-terminus, usually a large hydrophobic residue, is essential for high affinity interaction with MHCII molecules. In terms of biological role, allele DRB1*01:01: Displays an immunodominant epitope derived from Bacillus anthracis pagA/protective antigen, PA (KLPLYISNPNYKVNVYAVT), to both naive and PA-specific memory CD4-positive T cells. Presents immunodominant HIV-1 gag peptide (FRDYVDRFYKTLRAEQASQE) on infected dendritic cells for recognition by TRAV24-TRBV2 TCR on CD4-positive T cells and controls viral load. May present to T-helper 1 cells several HRV-16 epitopes derived from capsid proteins VP1 (PRFSLPFLSIASAYYMFYDG) and VP2 (PHQFINLRSNNSATLIVPYV), contributing to viral clearance. Displays commonly recognized peptides derived from IAV external protein HA (PKYVKQNTLKLAT and SNGNFIAPEYAYKIVK) and from internal proteins M, NP and PB1, with M-derived epitope (GLIYNRMGAVTTEV) being the most immunogenic. Presents a self-peptide derived from COL4A3 (GWISLWKGFSF) to TCR (TRAV14 biased) on CD4-positive, FOXP3-positive regulatory T cells and mediates immune tolerance to self. May present peptides derived from oncofetal trophoblast glycoprotein TPBG 5T4, known to be recognized by both T-helper 1 and regulatory T cells. Displays with low affinity a self-peptide derived from MBP (VHFFKNIVTPRTP). Its function is as follows. Allele DRB1*03:01: May present to T-helper 1 cells an HRV-16 epitope derived from capsid protein VP2 (NEKQPSDDNWLNFDGTLLGN), contributing to viral clearance. Displays self-peptides derived from retinal SAG (NRERRGIALDGKIKHE) and thyroid TG (LSSVVVDPSIRHFDV). Presents viral epitopes derived from HHV-6B gH/U48 and U85 antigens to polyfunctional CD4-positive T cells with cytotoxic activity implicated in control of HHV-6B infection. Presents several immunogenic epitopes derived from C.tetani neurotoxin tetX, playing a role in immune recognition and long-term protection. Allele DRB1*04:01: Presents an immunodominant bacterial epitope derived from M.tuberculosis esxB/culture filtrate antigen CFP-10 (EISTNIRQAGVQYSR), eliciting CD4-positive T cell effector functions such as IFNG production and cytotoxic activity. May present to T-helper 1 cells an HRV-16 epitope derived from capsid protein VP2 (NEKQPSDDNWLNFDGTLLGN), contributing to viral clearance. Presents tumor epitopes derived from melanoma-associated TYR antigen (QNILLSNAPLGPQFP and DYSYLQDSDPDSFQD), triggering CD4-positive T cell effector functions such as GMCSF production. Displays preferentially citrullinated self-peptides derived from VIM (GVYATR/citSSAVR and SAVRAR/citSSVPGVR) and ACAN (VVLLVATEGR/ CitVRVNSAYQDK). Displays self-peptides derived from COL2A1. Functionally, allele DRB1*04:02: Displays native or citrullinated self-peptides derived from VIM. In terms of biological role, allele DRB1*04:04: May present to T-helper 1 cells several HRV-16 epitopes derived from capsid proteins VP1 (HIVMQYMYVPPGAPIPTTRN) and VP2 (RGDSTITSQDVANAVVGYGV), contributing to viral clearance. Displays preferentially citrullinated self-peptides derived from VIM (SAVRAR/citSSVPGVR). Its function is as follows. Allele DRB1*04:05: May present to T-helper 1 cells an immunogenic epitope derived from tumor-associated antigen WT1 (KRYFKLSHLQMHSRKH), likely providing for effective antitumor immunity in a wide range of solid and hematological malignancies. Allele DRB1*05:01: Presents an immunodominant HIV-1 gag peptide (FRDYVDRFYKTLRAEQASQE) on infected dendritic cells for recognition by TRAV24-TRBV2 TCR on CD4-positive T cells and controls viral load. Functionally, allele DRB1*07:01: Upon EBV infection, presents latent antigen EBNA2 peptide (PRSPTVFYNIPPMPLPPSQL) to CD4-positive T cells, driving oligoclonal expansion and selection of a dominant virus-specific memory T cell subset with cytotoxic potential to directly eliminate virus-infected B cells. May present to T-helper 1 cells several HRV-16 epitopes derived from capsid proteins VP1 (PRFSLPFLSIASAYYMFYDG) and VP2 (VPYVNAVPMDSMVRHNNWSL), contributing to viral clearance. In the context of tumor immunesurveillance, may present to T-helper 1 cells an immunogenic epitope derived from tumor-associated antigen WT1 (MTEYKLVVVGAVGVGKSALTIQLI), likely providing for effective antitumor immunity in a wide range of solid and hematological malignancies. In metastatic epithelial tumors, presents to intratumoral CD4-positive T cells a KRAS neoantigen (MTEYKLVVVGAVGVGKSALTIQLI) carrying G12V hotspot driver mutation and may mediate tumor regression. In terms of biological role, allele DRB1*11:01: Displays an immunodominant HIV-1 gag peptide (FRDYVDRFYKTLRAEQASQE) on infected dendritic cells for recognition by TRAV24-TRBV2 TCR on CD4-positive T cells and controls viral load. May present to T-helper 1 cells an HRV-16 epitope derived from capsid protein VP2 (SDRIIQITRGDSTITSQDVA), contributing to viral clearance. Presents several immunogenic epitopes derived from C.tetani neurotoxin tetX, playing a role in immune recognition and longterm protection. In the context of tumor immunesurveillance, may present tumor-derived neoantigens to CD4-positive T cells and trigger anti-tumor helper functions. Its function is as follows. Allele DRB1*13:01: Presents viral epitopes derived from HHV-6B antigens to polyfunctional CD4-positive T cells implicated in control of HHV-6B infection. Allele DRB1*15:01: May present to T-helper 1 cells an HRV-16 epitope derived from capsid protein VP2 (SNNSATLIVPYVNAVPMDSM), contributing to viral clearance. Displays a self-peptide derived from MBP (ENPVVHFFKNIVTPR). May present to T-helper 1 cells an immunogenic epitope derived from tumor-associated antigen WT1 (KRYFKLSHLQMHSRKH), likely providing for effective antitumor immunity in a wide range of solid and hematological malignancies. Functionally, allele DRB1*15:02: Displays an immunodominant HIV-1 gag peptide (FRDYVDRFYKTLRAEQASQE) on infected dendritic cells for recognition by TRAV24-TRBV2 TCR on CD4-positive T cells and controls viral load. May present to T-helper 1 cells an immunogenic epitope derived from tumor-associated antigen WT1 (KRYFKLSHLQMHSRKH), likely providing for effective antitumor immunity in a wide range of solid and hematological malignancies. In terms of biological role, (Microbial infection) Acts as a receptor for Epstein-Barr virus on lymphocytes. This chain is HLA class II histocompatibility antigen, DRB1 beta chain, found in Homo sapiens (Human).